The chain runs to 478 residues: Adenylosuccinate lyase (478 aa).

Substrate-binding positions include R14–Y15, K81–D83, and T107–S108. H155 serves as the catalytic Proton donor/acceptor. Substrate is bound at residue Q237. Residue S285 is the Proton donor/acceptor of the active site. The substrate site is built by R299, R325, S330, and R334.

This sequence belongs to the lyase 1 family. Adenylosuccinate lyase subfamily. Homotetramer. Residues from neighboring subunits contribute catalytic and substrate-binding residues to each active site.

It carries out the reaction N(6)-(1,2-dicarboxyethyl)-AMP = fumarate + AMP. The catalysed reaction is (2S)-2-[5-amino-1-(5-phospho-beta-D-ribosyl)imidazole-4-carboxamido]succinate = 5-amino-1-(5-phospho-beta-D-ribosyl)imidazole-4-carboxamide + fumarate. Its pathway is purine metabolism; AMP biosynthesis via de novo pathway; AMP from IMP: step 2/2. It functions in the pathway purine metabolism; IMP biosynthesis via de novo pathway; 5-amino-1-(5-phospho-D-ribosyl)imidazole-4-carboxamide from 5-amino-1-(5-phospho-D-ribosyl)imidazole-4-carboxylate: step 2/2. In terms of biological role, catalyzes two non-sequential steps in de novo AMP synthesis: converts (S)-2-(5-amino-1-(5-phospho-D-ribosyl)imidazole-4-carboxamido)succinate (SAICAR) to fumarate plus 5-amino-1-(5-phospho-D-ribosyl)imidazole-4-carboxamide, and thereby also contributes to de novo IMP synthesis, and converts succinyladenosine monophosphate (SAMP) to AMP and fumarate. The protein is Adenylosuccinate lyase of Caenorhabditis briggsae.